The sequence spans 44 residues: Photosystem I reaction center subunit IX 2 (44 aa).

A helical transmembrane segment spans residues 13-35 (APVLATLWLSSTAVILIGVNSYF).

The protein belongs to the PsaJ family.

The protein resides in the cellular thylakoid membrane. In terms of biological role, may help in the organization of the PsaE and PsaF subunits. In Prochlorococcus marinus (strain NATL2A), this protein is Photosystem I reaction center subunit IX 2 (psaJ2).